Here is a 136-residue protein sequence, read N- to C-terminus: Transcription antitermination protein NusB (136 aa).

Belongs to the NusB family.

Involved in transcription antitermination. Required for transcription of ribosomal RNA (rRNA) genes. Binds specifically to the boxA antiterminator sequence of the ribosomal RNA (rrn) operons. This Treponema denticola (strain ATCC 35405 / DSM 14222 / CIP 103919 / JCM 8153 / KCTC 15104) protein is Transcription antitermination protein NusB.